We begin with the raw amino-acid sequence, 417 residues long: Gamma-glutamyl phosphate reductase (417 aa).

This sequence belongs to the gamma-glutamyl phosphate reductase family.

The protein resides in the cytoplasm. The enzyme catalyses L-glutamate 5-semialdehyde + phosphate + NADP(+) = L-glutamyl 5-phosphate + NADPH + H(+). Its pathway is amino-acid biosynthesis; L-proline biosynthesis; L-glutamate 5-semialdehyde from L-glutamate: step 2/2. Catalyzes the NADPH-dependent reduction of L-glutamate 5-phosphate into L-glutamate 5-semialdehyde and phosphate. The product spontaneously undergoes cyclization to form 1-pyrroline-5-carboxylate. The chain is Gamma-glutamyl phosphate reductase from Cronobacter sakazakii (strain ATCC BAA-894) (Enterobacter sakazakii).